The following is a 227-amino-acid chain: Large ribosomal subunit protein uL1 (227 aa).

Belongs to the universal ribosomal protein uL1 family. In terms of assembly, part of the 50S ribosomal subunit.

Functionally, binds directly to 23S rRNA. The L1 stalk is quite mobile in the ribosome, and is involved in E site tRNA release. Protein L1 is also a translational repressor protein, it controls the translation of the L11 operon by binding to its mRNA. The polypeptide is Large ribosomal subunit protein uL1 (Brevibacillus brevis (strain 47 / JCM 6285 / NBRC 100599)).